We begin with the raw amino-acid sequence, 375 residues long: 23S rRNA (uracil(747)-C(5))-methyltransferase RlmC (375 aa).

4 residues coordinate [4Fe-4S] cluster: Cys-3, Cys-11, Cys-14, and Cys-87. S-adenosyl-L-methionine is bound by residues Gln-212, Phe-241, Glu-262, and Asn-307. Residue Cys-334 is the Nucleophile of the active site.

The protein belongs to the class I-like SAM-binding methyltransferase superfamily. RNA M5U methyltransferase family. RlmC subfamily.

It catalyses the reaction uridine(747) in 23S rRNA + S-adenosyl-L-methionine = 5-methyluridine(747) in 23S rRNA + S-adenosyl-L-homocysteine + H(+). In terms of biological role, catalyzes the formation of 5-methyl-uridine at position 747 (m5U747) in 23S rRNA. The polypeptide is 23S rRNA (uracil(747)-C(5))-methyltransferase RlmC (Salmonella dublin (strain CT_02021853)).